Consider the following 1029-residue polypeptide: Huntingtin-interacting protein 1 (1029 aa).

Residues 32–160 form the ENTH domain; sequence ERESFERTQT…EYHTKNPRFP (129 aa). The residue at position 338 (Ser338) is a Phosphoserine. The stretch at 375–636 forms a coiled coil; that stretch reads HLIERLYREI…IQEALSQLEE (262 aa). The pDED stretch occupies residues 410-491; sequence SELEAELAEQ…HADLLRKNAE (82 aa). The I/LWEQ domain occupies 763 to 1004; the sequence is GLDIKQEELG…ELRKKHYELA (242 aa). The segment at 859 to 916 is important for actin binding; it reads RWTEGLISASKAVGWGATIMVDAADLVVQGKGKFEELMVCSREIAASTAQLVAASKVK. Residues 1009–1029 form a disordered region; it reads GWEEGTEASPSTVQEAIPDKE.

This sequence belongs to the SLA2 family. As to quaternary structure, homodimer. Binds actin. Binds HTT (via N-terminus). This interaction is restricted to the brain. Binds to IFT57. In normal conditions, it poorly interacts with IFT57, HIP1 being strongly associated with HTT. However, in mutant HTT proteins with a long poly-Gln region, interaction between HTT and HIP1 is inhibited, promoting the interaction between HIP1 and IFT57. Interacts with CLTB (via N-terminus). Interacts (via coiled coil domain) with AR. Interacts with AP2A1, AP2A2, CLTC and HIP1R. Interacts with GRIA1, GRIN2A and GRIN2B. Most abundantly expressed in brain. In brain, expressed in cortical tissue, hippocampus, the molecular layer of the cerebellum and olfactory bulb. Also expressed in spinal cord and bone marrow (at protein level). Expressed in reproductive tissues.

It localises to the cytoplasm. The protein localises to the nucleus. Its subcellular location is the endomembrane system. It is found in the cytoplasmic vesicle. The protein resides in the clathrin-coated vesicle membrane. Functionally, plays a role in clathrin-mediated endocytosis and trafficking. Involved in regulating AMPA receptor trafficking in the central nervous system in an NMDA-dependent manner. Regulates presynaptic nerve terminal activity. Enhances androgen receptor (AR)-mediated transcription. May act as a proapoptotic protein that induces cell death by acting through the intrinsic apoptosis pathway. Binds 3-phosphoinositides (via ENTH domain). May act through the ENTH domain to promote cell survival by stabilizing receptor tyrosine kinases following ligand-induced endocytosis. May play a functional role in the cell filament networks. May be required for differentiation, proliferation, and/or survival of somatic and germline progenitors. This Mus musculus (Mouse) protein is Huntingtin-interacting protein 1.